We begin with the raw amino-acid sequence, 210 residues long: Outer-membrane lipoprotein carrier protein (210 aa).

A signal peptide spans 1–26 (MHMIRRAAGALAVFAVAALAAAPAWA).

The protein belongs to the LolA family. As to quaternary structure, monomer.

The protein localises to the periplasm. Participates in the translocation of lipoproteins from the inner membrane to the outer membrane. Only forms a complex with a lipoprotein if the residue after the N-terminal Cys is not an aspartate (The Asp acts as a targeting signal to indicate that the lipoprotein should stay in the inner membrane). This Bordetella bronchiseptica (strain ATCC BAA-588 / NCTC 13252 / RB50) (Alcaligenes bronchisepticus) protein is Outer-membrane lipoprotein carrier protein.